A 397-amino-acid chain; its full sequence is Keratinocyte differentiation factor 1 (397 aa).

The span at 1 to 16 (MPRPGQPRPSSGPPRL) shows a compositional bias: pro residues. Disordered regions lie at residues 1–67 (MPRP…SAEP), 124–158 (EAAWAKEHNGVPPSPDRAPPSRRDGQKLKTSMGSS), and 191–214 (PLADPPPTRHSLPSTFTSSPRGSE). The span at 44–55 (RPDPKDPGHHGP) shows a compositional bias: basic and acidic residues. The span at 201–211 (SLPSTFTSSPR) shows a compositional bias: polar residues. A Phosphoserine modification is found at serine 218. Disordered stretches follow at residues 304–339 (ISTRKSRSRPQTSEGRSARSTAPAAAPDSGHETMVG) and 361–392 (ARKLRPYGAPGYPASQDSSFQGTDTDSSGAPL). The segment covering 321-330 (ARSTAPAAAP) has biased composition (low complexity). A compositionally biased stretch (polar residues) spans 375 to 388 (SQDSSFQGTDTDSS).

It localises to the cytoplasm. The protein resides in the cell junction. In terms of biological role, plays a role in the regulation of the epidermis formation during early development. Required both as an inhibitor of basal cell proliferation and a promoter of differentiation of basal progenitor cell progeny. This is Keratinocyte differentiation factor 1 (Kdf1) from Rattus norvegicus (Rat).